Here is a 362-residue protein sequence, read N- to C-terminus: MRNMATMLHLLTLILLTSPASTQTANAVPKRRLIGEDRESGRRWGVAATDLGIPYDMHNGQVGYLFGDTVSTMWVQEAKDLRSPVMLLSGIHPGEDGGIFFESAAGVDGDGLAPRLFYNGDHGDDGTGTWEFTVLPNDGISFPETGEHIISYTSIMNFTTSWTPNYAGLAYSTDGNSFSRLPTKWLNNDNNTDPFQMWTMQRDGDWVYVFTVRCARQYGPMMLQRVPWDKMTDKTEYQGWGWNGEDWGWQRPCSPILDGYFGEPSVRRLQDGTWAMVYLNASTSTPHIVSRTARGPTGPWSEETVQVNQAGDESLLYGGFIHPWSTGERNQLYLMVSNWTSTSDAAPTPEGLVSVSQFTGTL.

The N-terminal stretch at 1–22 is a signal peptide; sequence MRNMATMLHLLTLILLTSPAST. Residues asparagine 157, asparagine 190, asparagine 280, and asparagine 338 are each glycosylated (N-linked (GlcNAc...) asparagine).

Its function is as follows. Part of the gene cluster that mediates the biosynthesis of notoamide, a fungal indole alkaloid that belongs to a family of natural products containing a characteristic bicyclo[2.2.2]diazaoctane core. The first step of notoamide biosynthesis involves coupling of L-proline and L-tryptophan by the bimodular NRPS notE', to produce cyclo-L-tryptophan-L-proline called brevianamide F. The reverse prenyltransferase notF' then acts as a deoxybrevianamide E synthase and converts brevianamide F to deoxybrevianamide E via reverse prenylation at C-2 of the indole ring leading to the bicyclo[2.2.2]diazaoctane core. Deoxybrevianamide E is further hydroxylated at C-6 of the indole ring, likely catalyzed by the cytochrome P450 monooxygenase notG', to yield 6-hydroxy-deoxybrevianamide E. 6-hydroxy-deoxybrevianamide E is a specific substrate of the prenyltransferase notC' for normal prenylation at C-7 to produce 6-hydroxy-7-prenyl-deoxybrevianamide, also called notoamide S. As the proposed pivotal branching point in notoamide biosynthesis, notoamide S can be diverted to notoamide E through an oxidative pyran ring closure putatively catalyzed by either notH' cytochrome P450 monooxygenase or the notD' FAD-linked oxidoreductase. This step would be followed by an indole 2,3-epoxidation-initiated pinacol-like rearrangement catalyzed by the notB' FAD-dependent monooxygenase leading to the formation of notoamide C and notoamide D. On the other hand notoamide S is converted to notoamide T by notH' (or notD'), a bifunctional oxidase that also functions as the intramolecular Diels-Alderase responsible for generation of (-)-notoamide T. To generate antipodal (+)-notoaminide T, notH (or notD) in Aspergillus strain MF297-2 is expected to catalyze a Diels-Alder reaction leading to the opposite stereochemistry. The remaining oxidoreductase notD' (or notH') likely catalyzes the oxidative pyran ring formation to yield (-)-stephacidin A. The FAD-dependent monooxygenase notI' is highly similar to notB' and is predicted to catalyze a similar conversion from (-)-stephacidin A to (+)-notoamide B via the 2,3-epoxidation of (-)-stephacidin A followed by a pinacol-type rearrangement. Finally, it remains unclear which enzyme could be responsible for the final hydroxylation steps leading to notoamide A and sclerotiamide. The function of notJ' in the notoamide biosynthesis has not been determined yet. This chain is Notoamide biosynthesis cluster protein J', found in Aspergillus versicolor.